The following is a 224-amino-acid chain: PKHD-type hydroxylase Shewmr7_0698 (224 aa).

Residues 78 to 176 form the Fe2OG dioxygenase domain; the sequence is QFYPPLFNRY…RTAAFMWLQS (99 aa). His96, Asp98, and His157 together coordinate Fe cation. Residue Arg167 participates in 2-oxoglutarate binding.

Fe(2+) is required as a cofactor. L-ascorbate serves as cofactor.

In Shewanella sp. (strain MR-7), this protein is PKHD-type hydroxylase Shewmr7_0698.